A 102-amino-acid chain; its full sequence is Small ribosomal subunit protein eS24 (102 aa).

The segment at 70-102 (VYDSPAQAAEVEHDHMLERNKIGADDADAEEAE) is disordered. A compositionally biased stretch (basic and acidic residues) spans 79 to 93 (EVEHDHMLERNKIGA).

Belongs to the eukaryotic ribosomal protein eS24 family.

This is Small ribosomal subunit protein eS24 from Halobacterium salinarum (strain ATCC 29341 / DSM 671 / R1).